The sequence spans 233 residues: Adenosine 5'-phosphosulfate reductase (233 aa).

Residues Cys120, Cys121, Cys203, and Cys206 each contribute to the [4Fe-4S] cluster site. The active-site Nucleophile; cysteine thiosulfonate intermediate is Cys229.

It belongs to the PAPS reductase family. CysH subfamily. The cofactor is [4Fe-4S] cluster.

It localises to the cytoplasm. The catalysed reaction is [thioredoxin]-disulfide + sulfite + AMP + 2 H(+) = adenosine 5'-phosphosulfate + [thioredoxin]-dithiol. It participates in sulfur metabolism; hydrogen sulfide biosynthesis; sulfite from sulfate. Functionally, catalyzes the formation of sulfite from adenosine 5'-phosphosulfate (APS) using thioredoxin as an electron donor. The protein is Adenosine 5'-phosphosulfate reductase of Bacillus velezensis (strain DSM 23117 / BGSC 10A6 / LMG 26770 / FZB42) (Bacillus amyloliquefaciens subsp. plantarum).